We begin with the raw amino-acid sequence, 633 residues long: Probable alkaline/neutral invertase A, chloroplastic (633 aa).

Residues 1–71 constitute a chloroplast transit peptide; the sequence is MNAITFLGNS…TNAVPFCTDR (71 aa). S623 bears the Phosphoserine mark.

This sequence belongs to the glycosyl hydrolase 100 family. In terms of tissue distribution, expressed in flowers.

The protein localises to the plastid. It localises to the chloroplast. It carries out the reaction Hydrolysis of terminal non-reducing beta-D-fructofuranoside residues in beta-D-fructofuranosides.. Its function is as follows. Chloroplastic invertase that cleaves sucrose into glucose and fructose and may participate in the carbon flux between the cytosol and plastids in leaves. The protein is Probable alkaline/neutral invertase A, chloroplastic of Arabidopsis thaliana (Mouse-ear cress).